Here is a 240-residue protein sequence, read N- to C-terminus: Glutathione S-transferase theta-1 (240 aa).

A GST N-terminal domain is found at 2–82; it reads GLELYLDLLS…YLARKYKVPD (81 aa). Residues His-40, 53–54, and 66–67 contribute to the glutathione site; these read KV and ES. Residues 88-226 enclose the GST C-terminal domain; sequence DLQACARVDE…AKDSQPADPT (139 aa).

The protein belongs to the GST superfamily. Theta family. As to quaternary structure, homodimer.

The protein localises to the cytoplasm. The enzyme catalyses RX + glutathione = an S-substituted glutathione + a halide anion + H(+). Its function is as follows. Conjugation of reduced glutathione to a wide number of exogenous and endogenous hydrophobic electrophiles. Also binds steroids, bilirubin, carcinogens and numerous organic anions. Has dichloromethane dehalogenase activity. The chain is Glutathione S-transferase theta-1 (GSTT1) from Bos taurus (Bovine).